We begin with the raw amino-acid sequence, 353 residues long: Methionine import ATP-binding protein MetN (353 aa).

The 244-residue stretch at 6–249 (LKNVDVDFPQ…PKQELTKKFV (244 aa)) folds into the ABC transporter domain. 41 to 48 (GFSGAGKS) contacts ATP.

Belongs to the ABC transporter superfamily. Methionine importer (TC 3.A.1.24) family. As to quaternary structure, the complex is composed of two ATP-binding proteins (MetN), two transmembrane proteins (MetI) and a solute-binding protein (MetQ).

It localises to the cell membrane. It catalyses the reaction L-methionine(out) + ATP + H2O = L-methionine(in) + ADP + phosphate + H(+). It carries out the reaction D-methionine(out) + ATP + H2O = D-methionine(in) + ADP + phosphate + H(+). Part of the ABC transporter complex MetNIQ involved in methionine import. Responsible for energy coupling to the transport system. The chain is Methionine import ATP-binding protein MetN from Lactobacillus acidophilus (strain ATCC 700396 / NCK56 / N2 / NCFM).